The following is a 226-amino-acid chain: Membrane protein (226 aa).

At 1–11 the chain is on the virion surface side; it reads MSNGSIPVDEV. A helical membrane pass occupies residues 12–32; the sequence is IEHLRNWNFTWNIILTILLVV. At 33 to 41 the chain is on the intravirion side; sequence LQYGHYKYS. A helical membrane pass occupies residues 42–62; sequence VFLYGVKMAILWILWPLVLAL. The Virion surface segment spans residues 63–75; that stretch reads SLFDAWASFQVNW. The helical transmembrane segment at 76 to 96 threads the bilayer; sequence VFFAFSILMACITLMLWIMYF. The Intravirion portion of the chain corresponds to 97–226; it reads VNSIRLWRRT…TDSEKVLHLV (130 aa). The interval 200-216 is interaction with N protein; sequence RSKHGDYSAVSNPSAVL.

This sequence belongs to the alphacoronaviruses M protein family. As to quaternary structure, homomultimer. Interacts with envelope E protein in the budding compartment of the host cell, which is located between endoplasmic reticulum and the Golgi complex. Forms a complex with HE and S proteins. Interacts with nucleocapsid N protein. This interaction probably participates in RNA packaging into the virus.

Its subcellular location is the virion membrane. The protein resides in the host Golgi apparatus membrane. Its function is as follows. Component of the viral envelope that plays a central role in virus morphogenesis and assembly via its interactions with other viral proteins. This is Membrane protein from Sus scrofa (Pig).